We begin with the raw amino-acid sequence, 168 residues long: Endoribonuclease YbeY (168 aa).

Positions 125, 129, and 135 each coordinate Zn(2+).

The protein belongs to the endoribonuclease YbeY family. Requires Zn(2+) as cofactor.

The protein resides in the cytoplasm. In terms of biological role, single strand-specific metallo-endoribonuclease involved in late-stage 70S ribosome quality control and in maturation of the 3' terminus of the 16S rRNA. This chain is Endoribonuclease YbeY, found in Rhodopseudomonas palustris (strain BisB18).